The sequence spans 212 residues: Imidazole glycerol phosphate synthase subunit HisH (212 aa).

A Glutamine amidotransferase type-1 domain is found at 3–212 (DVAIIDYGMG…MLANFISWAP (210 aa)). Cysteine 82 serves as the catalytic Nucleophile. Catalysis depends on residues histidine 192 and glutamate 194.

Heterodimer of HisH and HisF.

Its subcellular location is the cytoplasm. The catalysed reaction is 5-[(5-phospho-1-deoxy-D-ribulos-1-ylimino)methylamino]-1-(5-phospho-beta-D-ribosyl)imidazole-4-carboxamide + L-glutamine = D-erythro-1-(imidazol-4-yl)glycerol 3-phosphate + 5-amino-1-(5-phospho-beta-D-ribosyl)imidazole-4-carboxamide + L-glutamate + H(+). It catalyses the reaction L-glutamine + H2O = L-glutamate + NH4(+). It functions in the pathway amino-acid biosynthesis; L-histidine biosynthesis; L-histidine from 5-phospho-alpha-D-ribose 1-diphosphate: step 5/9. IGPS catalyzes the conversion of PRFAR and glutamine to IGP, AICAR and glutamate. The HisH subunit catalyzes the hydrolysis of glutamine to glutamate and ammonia as part of the synthesis of IGP and AICAR. The resulting ammonia molecule is channeled to the active site of HisF. The chain is Imidazole glycerol phosphate synthase subunit HisH from Aromatoleum aromaticum (strain DSM 19018 / LMG 30748 / EbN1) (Azoarcus sp. (strain EbN1)).